Here is a 360-residue protein sequence, read N- to C-terminus: Photosystem II protein D1 2 (360 aa).

3 consecutive transmembrane segments (helical) span residues 29-46, 118-133, and 142-156; these read YIGWFGVLMVPTLLSATI, HFLIGIFAYLGREWEF, and WICVAYSAPVAAATA. Histidine 118 provides a ligand contact to chlorophyll a. Tyrosine 126 serves as a coordination point for pheophytin a. 2 residues coordinate [CaMn4O5] cluster: aspartate 170 and glutamate 189. The helical transmembrane segment at 197-218 threads the bilayer; that stretch reads LHMFGVAGVFGGSLFAAMHGSL. Residue histidine 198 coordinates chlorophyll a. Residues histidine 215 and 264 to 265 contribute to the a quinone site; that span reads SF. Residue histidine 215 participates in Fe cation binding. Histidine 272 is a Fe cation binding site. A helical transmembrane segment spans residues 274–288; it reads FLAAWPVIGIWLTSL. Positions 332, 333, 342, and 344 each coordinate [CaMn4O5] cluster. Positions 345-360 are excised as a propeptide; the sequence is GTESAPVAFAAALGDG.

It belongs to the reaction center PufL/M/PsbA/D family. As to quaternary structure, PSII is composed of 1 copy each of membrane proteins PsbA, PsbB, PsbC, PsbD, PsbE, PsbF, PsbH, PsbI, PsbJ, PsbK, PsbL, PsbM, PsbT, PsbX, Psb30/Ycf12, peripheral proteins PsbO, CyanoQ (PsbQ), PsbU, PsbV and a large number of cofactors. It forms dimeric complexes. The D1/D2 heterodimer binds P680, chlorophylls that are the primary electron donor of PSII, and subsequent electron acceptors. It shares a non-heme iron and each subunit binds pheophytin, quinone, additional chlorophylls, carotenoids and lipids. D1 provides most of the ligands for the Mn4-Ca-O5 cluster of the oxygen-evolving complex (OEC). There is also a Cl(-1) ion associated with D1 and D2, which is required for oxygen evolution. The PSII complex binds additional chlorophylls, carotenoids and specific lipids. serves as cofactor. Post-translationally, tyr-161 forms a radical intermediate that is referred to as redox-active TyrZ, YZ or Y-Z. In terms of processing, C-terminally processed by CtpA; processing is essential to allow assembly of the oxygen-evolving complex and thus photosynthetic growth.

The protein localises to the cell inner membrane. The enzyme catalyses 2 a plastoquinone + 4 hnu + 2 H2O = 2 a plastoquinol + O2. Functionally, photosystem II (PSII) is a light-driven water:plastoquinone oxidoreductase that uses light energy to abstract electrons from H(2)O, generating O(2) and a proton gradient subsequently used for ATP formation. It consists of a core antenna complex that captures photons, and an electron transfer chain that converts photonic excitation into a charge separation. The D1/D2 (PsbA/PsbD) reaction center heterodimer binds P680, the primary electron donor of PSII as well as several subsequent electron acceptors. This Gloeobacter violaceus (strain ATCC 29082 / PCC 7421) protein is Photosystem II protein D1 2.